We begin with the raw amino-acid sequence, 289 residues long: UPF0761 membrane protein ESA_04062 (289 aa).

6 helical membrane passes run 44-64, 104-124, 140-160, 183-203, 215-235, and 244-264; these read LLSL…FPMF, VGAL…DSAL, FAVY…SLVI, IFPL…VPTT, LVAA…ITMF, and VLAV…IVLL.

This sequence belongs to the UPF0761 family.

It is found in the cell inner membrane. This is UPF0761 membrane protein ESA_04062 from Cronobacter sakazakii (strain ATCC BAA-894) (Enterobacter sakazakii).